The following is a 603-amino-acid chain: Iron-sulfur clusters transporter ATM1, mitochondrial (603 aa).

A helical transmembrane segment spans residues 20–41; the sequence is VLLAVGLLVGGKVLNVQVPFFF. An ABC transmembrane type-1 domain is found at 20–310; it reads VLLAVGLLVG…LGSVYRELRQ (291 aa). The Mitochondrial intermembrane segment spans residues 42–64; sequence REIVDSLNVDIAATGGTVATVAG. Residues 65 to 88 form a helical membrane-spanning segment; it reads TMIFAYGASRIGAVVSQELRNAVF. At 89–137 the chain is on the mitochondrial matrix side; it reads SSVAQKAIRRVATRTFGHLLNLDLNFHLSKQTGGLTRAIDRGTKGISFL. Residues 138-161 traverse the membrane as a helical segment; it reads LTSMVFHIVPTALEISMVCGILTY. Residue Gln162 is a topological domain, mitochondrial intermembrane. Residues 163–183 traverse the membrane as a helical segment; the sequence is FGWEFAAVTALTMSAYTAFTI. Residues 184-249 lie on the Mitochondrial matrix side of the membrane; the sequence is WTTAWRTKFR…SSIKVATSLA (66 aa). Residues 189 to 193 and 252 to 255 each bind glutathione; these read RTKFR and NSGQ. The helical transmembrane segment at 250-268 threads the bilayer; the sequence is FLNSGQNIIFSSALTIMMW. Topologically, residues 269 to 283 are mitochondrial intermembrane; that stretch reads LGAKGIVAGSLSVGD. The chain crosses the membrane as a helical span at residues 284-305; sequence LVLINQLVFQLSVPLNFLGSVY. Gly302 contributes to the glutathione binding site. At 306–603 the chain is on the mitochondrial matrix side; it reads RELRQSLLDM…SEREAPVPVK (298 aa). In terms of domain architecture, ABC transporter spans 345 to 581; that stretch reads IRFDNVSFGY…NGLYTELWMA (237 aa). ATP-binding positions include Tyr354 and 378 to 389; that span reads GPSGCGKSTLLR.

The protein belongs to the ABC transporter superfamily. ABCB family. Heavy Metal importer (TC 3.A.1.210) subfamily. Homodimer.

It localises to the mitochondrion inner membrane. Its function is as follows. Performs an essential function in the generation of cytoplasmic iron-sulfur proteins by mediating the ATP-dependent export of Fe/S cluster precursors synthesized by NFS1 and other mitochondrial proteins. Hydrolyzes ATP. Binds glutathione and may function by transporting a glutathione-conjugated iron-sulfur compound. The sequence is that of Iron-sulfur clusters transporter ATM1, mitochondrial from Chaetomium globosum (strain ATCC 6205 / CBS 148.51 / DSM 1962 / NBRC 6347 / NRRL 1970) (Soil fungus).